Reading from the N-terminus, the 393-residue chain is Venom metalloproteinase BumaMPs1 (393 aa).

Positions 1–15 (MFVHLLVLLFAAVEA) are cleaved as a signal peptide. Asparagine 158 is a glycosylation site (N-linked (GlcNAc...) asparagine). One can recognise a Peptidase M12B domain in the interval 167–377 (KCVKIEYVFV…RVEELITRRK (211 aa)). Histidine 323 is a binding site for Zn(2+). The active site involves glutamate 324. Positions 327 and 333 each coordinate Zn(2+). Residues 378-393 (INHCIVETCDGKRKRN) form a disintegrin-like domain region.

Belongs to the venom metalloproteinase (M12B) family. Zn(2+) serves as cofactor. In terms of processing, contains several disulfide bonds. In terms of tissue distribution, expressed by the venom gland.

The protein resides in the secreted. In terms of biological role, metalloprotease. This Olivierus martensii (Manchurian scorpion) protein is Venom metalloproteinase BumaMPs1.